The primary structure comprises 709 residues: Caprin-1 (709 aa).

Low complexity-rich tracts occupy residues 1-15 and 22-43; these read MPSA…SKSS and GSSG…QHPA. The tract at residues 1 to 50 is disordered; sequence MPSATSHSGSGSKSSGPPPPSGSSGSEAAAGAGAAAPASQHPATGTGAVQ. Residue Pro2 is modified to N-acetylproline. Position 2 is an N-acetylalanine (Pro2). Ser10 is modified (phosphoserine). Residues 60–94 are a coiled coil; the sequence is VIDKKLRNLEKKKGKLDDYQERMNKGERLNQDQLD. Ser115 is subject to Phosphoserine. Residues 125–153 are a coiled coil; it reads KTIKKTARREQLMREEAEQKRLKTVLELQ. Arg165 is modified (omega-N-methylarginine). Positions 260-291 are disordered; that stretch reads EEAASAPAVEDQVPEAEPEPAEEYTEQSEVES. Over residues 271–291 the composition is skewed to acidic residues; it reads QVPEAEPEPAEEYTEQSEVES. Phosphoserine occurs at positions 335 and 343. The interval 360–381 is G3BP1-binding; it reads QDLMAQMQGPYNFIQDSMLDFE. Disordered stretches follow at residues 417-446, 475-499, and 524-709; these read LAQP…TASQ, TDQT…GTSK, and APVP…QQVN. Residues 433 to 446 are compositionally biased toward polar residues; that stretch reads PLVSSTSEGYTASQ. Low complexity-rich tracts occupy residues 477–491 and 537–570; these read QTTA…SQPQ and QQNQ…QTVV. Residues 577–605 show a composition bias toward polar residues; it reads PDQSHQVTGNHQQPPQQNTGFPRSNQPYY. Tyr625 is subject to Phosphotyrosine; by EPHA4. An omega-N-methylarginine mark is found at Arg626 and Arg633. Tyr636 and Tyr639 each carry phosphotyrosine; by EPHA4. At Arg640 the chain carries Omega-N-methylarginine. Positions 642 to 657 are enriched in polar residues; sequence SFSNTPNSGYTQSQFS. Ser644 and Ser649 each carry an O-linked (GlcNAc) serine glycan. Phosphotyrosine; by EPHA4 occurs at positions 651, 662, 665, and 670. 2 stretches are compositionally biased toward low complexity: residues 676-686 and 697-709; these read RGSGQSGPRGA and NRGM…QQVN. The residue at position 698 (Arg698) is an Asymmetric dimethylarginine; alternate. Arg698 bears the Omega-N-methylarginine; alternate mark.

This sequence belongs to the caprin family. As to quaternary structure, may form homomultimers. Interacts with G3BP1; interaction is direct and promotes stress granule formation. Interacts with G3BP2; interaction is direct and promotes stress granule formation. Interacts with PQBP1. Interacts with DDX3X. Interacts (when phosphorylated by EPHA4) with FMR1; interaction with FMR1 promotes formation of a membraneless compartment. In terms of assembly, (Microbial infection) Interacts with Zika virus capsid protein C; this interaction is probably linked to the inhibition of stress granules formation by the virus. (Microbial infection) Interacts with rotavirus A non-structural protein 5; this interaction probably plays a role in the sequestration of CAPRIN1 in viral factories. As to quaternary structure, (Microbial infection) Interacts with Japanese encephalitis virus capsid protein C; this interaction is involved in the suppression of the integrated stress response by the virus. In terms of processing, tyrosine phosphorylation by EPHA4 promotes interaction with FMR1 and liquid-liquid phase separation (LLPS) for the formation of a membraneless compartment that concentrates mRNAs with associated regulatory factors. Post-translationally, O-glycosylated (O-GlcNAcylated), in a cell cycle-dependent manner. O-glycosylation by OGT inhibit ability to undergo liquid-liquid phase separation (LLPS). In terms of tissue distribution, ubiquitous.

It localises to the cytoplasm. Its subcellular location is the cytoplasmic ribonucleoprotein granule. It is found in the cytosol. The protein resides in the cell projection. The protein localises to the dendrite. It localises to the lamellipodium. With respect to regulation, ability to mediate liquid-liquid phase separation is regulated by ATP: moderate concentrations of ATP enhance phase separation, whereas high concentrations of ATP lead to inhibition of phase separation. Its function is as follows. mRNA-binding protein that acts as a regulator of mRNAs transport, translation and/or stability, and which is involved in neurogenesis, synaptic plasticity in neurons and cell proliferation and migration in multiple cell types. Plays an essential role in cytoplasmic stress granule formation. Acts as an mRNA regulator by mediating formation of some phase-separated membraneless compartment: undergoes liquid-liquid phase separation upon binding to target mRNAs, leading to assemble mRNAs into cytoplasmic ribonucleoprotein granules that concentrate mRNAs with associated regulatory factors. Undergoes liquid-liquid phase separation following phosphorylation and interaction with FMR1, promoting formation of cytoplasmic ribonucleoprotein granules that concentrate mRNAs with factors that inhibit translation and mediate deadenylation of target mRNAs. In these cytoplasmic ribonucleoprotein granules, CAPRIN1 mediates recruitment of CNOT7 deadenylase, leading to mRNA deadenylation and degradation. Binds directly and selectively to MYC and CCND2 mRNAs. In neuronal cells, directly binds to several mRNAs associated with RNA granules, including BDNF, CAMK2A, CREB1, MAP2, NTRK2 mRNAs, as well as to GRIN1 and KPNB1 mRNAs, but not to rRNAs. The polypeptide is Caprin-1 (Homo sapiens (Human)).